Reading from the N-terminus, the 113-residue chain is Ig heavy chain V-III region E109 (113 aa).

Residues 1-113 (EVKLEESGGG…YWGQGTLVTV (113 aa)) form the Ig-like domain. An intrachain disulfide couples Cys-22 to Cys-98.

The chain is Ig heavy chain V-III region E109 from Mus musculus (Mouse).